The following is a 243-amino-acid chain: uncharacterized protein (243 aa).

4 helical membrane-spanning segments follow: residues 38–58, 99–119, 143–163, and 204–224; these read AYFLFLLSFFVTAVMFLVGIF, FGIAILALGLFSLFLMIFLGY, FYFSVVAYCFWIALMLLFLVL, and AFATALCITLVVYELPFLGLF.

The protein resides in the cell membrane. This is an uncharacterized protein from Mycoplasma pneumoniae (strain ATCC 29342 / M129 / Subtype 1) (Mycoplasmoides pneumoniae).